The sequence spans 365 residues: GDSL esterase/lipase At3g62280 (365 aa).

An N-terminal signal peptide occupies residues 1–25; it reads MDYTVSSLQCFFLVLCLSLLVCSNS. The active-site Nucleophile is the serine 43. N-linked (GlcNAc...) asparagine glycans are attached at residues asparagine 137, asparagine 178, and asparagine 231. Residues aspartate 333 and histidine 336 contribute to the active site.

It belongs to the 'GDSL' lipolytic enzyme family.

The protein localises to the secreted. The chain is GDSL esterase/lipase At3g62280 from Arabidopsis thaliana (Mouse-ear cress).